The following is a 279-amino-acid chain: Large ribosomal subunit protein uL2 (279 aa).

2 disordered regions span residues Leu34–His58 and Val225–Arg279. Positions Gly251–Ile268 are enriched in basic and acidic residues. Residues Val269–Arg279 are compositionally biased toward basic residues.

Belongs to the universal ribosomal protein uL2 family. In terms of assembly, part of the 50S ribosomal subunit. Forms a bridge to the 30S subunit in the 70S ribosome.

In terms of biological role, one of the primary rRNA binding proteins. Required for association of the 30S and 50S subunits to form the 70S ribosome, for tRNA binding and peptide bond formation. It has been suggested to have peptidyltransferase activity; this is somewhat controversial. Makes several contacts with the 16S rRNA in the 70S ribosome. The polypeptide is Large ribosomal subunit protein uL2 (Micrococcus luteus (strain ATCC 4698 / DSM 20030 / JCM 1464 / CCM 169 / CCUG 5858 / IAM 1056 / NBRC 3333 / NCIMB 9278 / NCTC 2665 / VKM Ac-2230) (Micrococcus lysodeikticus)).